The primary structure comprises 134 residues: Large ribosomal subunit protein uL16c (134 aa).

The protein belongs to the universal ribosomal protein uL16 family. As to quaternary structure, part of the 50S ribosomal subunit.

The protein resides in the plastid. It localises to the chloroplast. The polypeptide is Large ribosomal subunit protein uL16c (Guillardia theta (Cryptophyte)).